Reading from the N-terminus, the 86-residue chain is Large ribosomal subunit protein eL43 (86 aa).

Residues Cys38, Cys41, Cys56, and Cys59 each contribute to the Zn(2+) site. Residues 38–59 (CPVCGRKAVRRISTGIWQCQKC) form a C4-type zinc finger.

This sequence belongs to the eukaryotic ribosomal protein eL43 family. Part of the 50S ribosomal subunit. Requires Zn(2+) as cofactor.

The polypeptide is Large ribosomal subunit protein eL43 (Thermococcus kodakarensis (strain ATCC BAA-918 / JCM 12380 / KOD1) (Pyrococcus kodakaraensis (strain KOD1))).